Here is a 161-residue protein sequence, read N- to C-terminus: V-type proton ATPase 16 kDa proteolipid subunit c (161 aa).

Topologically, residues 1–15 (MSYDLATAERAAYAP) are lumenal. Residues 16-36 (FFGYMGAASAQIFTVLGAAYG) form a helical membrane-spanning segment. The Cytoplasmic segment spans residues 37–58 (TAKSAVGISSMGVMRPELIMKS). Residues 59–79 (VIPVIMAGIIGIYGLVVAMVL) traverse the membrane as a helical segment. The Lumenal segment spans residues 80 to 98 (RGKVTSASAGYTLDKGFAH). A helical membrane pass occupies residues 99–119 (LAAGLTCGLCGLGAGYAIGIV). The Cytoplasmic segment spans residues 120–137 (GDAGVRGTAQQPRLFVGM). The helical transmembrane segment at 138–158 (ILILIFSEVLGLYGMIVALIL) threads the bilayer. Topologically, residues 159 to 161 (GTS) are lumenal.

The protein belongs to the V-ATPase proteolipid subunit family. In terms of assembly, V-ATPase is a heteromultimeric enzyme made up of two complexes: the ATP-hydrolytic V1 complex and the proton translocation V0 complex. The V1 complex consists of three catalytic AB heterodimers that form a heterohexamer, three peripheral stalks each consisting of EG heterodimers, one central rotor including subunits D and F, and the regulatory subunits C and H. The proton translocation complex V0 consists of the proton transport subunit a, a ring of proteolipid subunits c9c'', rotary subunit d, subunits e and f, and the accessory subunits vah-19/Ac45 and vah-20/PRR.

The protein localises to the membrane. Functionally, proton-conducting pore forming subunit of the V0 complex of vacuolar(H+)-ATPase (V-ATPase), a multisubunit enzyme composed of a peripheral complex (V1) that hydrolyzes ATP and a membrane integral complex (V0) that translocates protons. V-ATPase is responsible for acidifying and maintaining the pH of intracellular compartments and in some cell types, is targeted to the plasma membrane, where it is responsible for acidifying the extracellular environment. The sequence is that of V-type proton ATPase 16 kDa proteolipid subunit c (12) from Ascaris suum (Pig roundworm).